The primary structure comprises 215 residues: MSEAKRRAAEKAIEYVENDMIIGVGTGSTVAYFIDALGRTPKRIKGAVSSSEQSTAHLKQHGIEVLELNHTGTLPLYVDGADECDPYKRLIKGGGASLTREKIIAEASKQFICIIDPNKQVATLGKFPLPIEVIPMARSLVARQIMARTDGQPVWREGVITDNGNVILDVHHLCITDPVKLEQELNQIPGVVCVGLFARRCADLVIIGSEPPHIL.

Residues 26–29 (TGST), 79–82 (DGAD), and 92–95 (KGGG) each bind substrate. Glutamate 101 (proton acceptor) is an active-site residue. Residue lysine 119 participates in substrate binding.

Belongs to the ribose 5-phosphate isomerase family. In terms of assembly, homodimer.

The enzyme catalyses aldehydo-D-ribose 5-phosphate = D-ribulose 5-phosphate. The protein operates within carbohydrate degradation; pentose phosphate pathway; D-ribose 5-phosphate from D-ribulose 5-phosphate (non-oxidative stage): step 1/1. Its function is as follows. Catalyzes the reversible conversion of ribose-5-phosphate to ribulose 5-phosphate. The protein is Ribose-5-phosphate isomerase A of Xylella fastidiosa (strain M12).